Reading from the N-terminus, the 152-residue chain is Transcriptional regulator MraZ (152 aa).

2 SpoVT-AbrB domains span residues 5–52 and 81–124; these read VTSI…PLHE and ATEC…QDKQ.

This sequence belongs to the MraZ family. Forms oligomers.

The protein localises to the cytoplasm. Its subcellular location is the nucleoid. This chain is Transcriptional regulator MraZ, found in Actinobacillus pleuropneumoniae serotype 3 (strain JL03).